Reading from the N-terminus, the 659-residue chain is Protein phosphatase Slingshot homolog 3 (659 aa).

The segment covering 1-16 (MALVTVSRSPPGSGAS) has biased composition (polar residues). The disordered stretch occupies residues 1–31 (MALVTVSRSPPGSGASTPVGPWDQAVQRRSR). An N-acetylalanine modification is found at Ala-2. A phosphoserine mark is found at Ser-9 and Ser-37. Positions 46–96 (LGLQDGGDNDDAAEASSEPTEKAPSEEELHGDQTDFGQGSQSPQKQEEQRQ) are disordered. A compositionally biased stretch (basic and acidic residues) spans 64-78 (PTEKAPSEEELHGDQ). Positions 80–89 (DFGQGSQSPQ) are enriched in polar residues. 2 positions are modified to phosphoserine: Ser-85 and Ser-87. Residues 269 to 324 (EQMEQAIRAELWKVLDVSDLESVTSKEIRQALELRLGLPLQQYRDFIDNQMLLLVA) enclose the DEK-C domain. In terms of domain architecture, Tyrosine-protein phosphatase spans 328-469 (RASRIFPHLY…LQIYQGILTA (142 aa)). Cys-413 functions as the Phosphocysteine intermediate in the catalytic mechanism. Disordered stretches follow at residues 482-534 (GVSP…RINL), 547-603 (SLEL…RQSV), and 617-638 (QAFQ…ISST). A compositionally biased stretch (low complexity) spans 547–557 (SLELESTSETS).

It belongs to the protein-tyrosine phosphatase family. As to quaternary structure, does not bind to, or colocalize with, filamentous actin.

It is found in the cytoplasm. The protein localises to the cytoskeleton. Its subcellular location is the nucleus. The catalysed reaction is O-phospho-L-tyrosyl-[protein] + H2O = L-tyrosyl-[protein] + phosphate. It carries out the reaction O-phospho-L-seryl-[protein] + H2O = L-seryl-[protein] + phosphate. It catalyses the reaction O-phospho-L-threonyl-[protein] + H2O = L-threonyl-[protein] + phosphate. Functionally, protein phosphatase which may play a role in the regulation of actin filament dynamics. Can dephosphorylate and activate the actin binding/depolymerizing factor cofilin, which subsequently binds to actin filaments and stimulates their disassembly. This chain is Protein phosphatase Slingshot homolog 3 (SSH3), found in Homo sapiens (Human).